The sequence spans 329 residues: uncharacterized protein (329 aa).

A coiled-coil region spans residues 56-247; the sequence is LNKEEQFQED…EAEKTHQAKL (192 aa).

This is an uncharacterized protein from Bos taurus (Bovine).